The primary structure comprises 265 residues: tRNA pseudouridine synthase A (265 aa).

Residue Asp52 is the Nucleophile of the active site. Tyr112 serves as a coordination point for substrate.

It belongs to the tRNA pseudouridine synthase TruA family. Homodimer.

The catalysed reaction is uridine(38/39/40) in tRNA = pseudouridine(38/39/40) in tRNA. Formation of pseudouridine at positions 38, 39 and 40 in the anticodon stem and loop of transfer RNAs. This Akkermansia muciniphila (strain ATCC BAA-835 / DSM 22959 / JCM 33894 / BCRC 81048 / CCUG 64013 / CIP 107961 / Muc) protein is tRNA pseudouridine synthase A.